The sequence spans 333 residues: Glycerol-3-phosphate dehydrogenase [NAD(P)+] (333 aa).

Residues tryptophan 11, arginine 34, and lysine 107 each contribute to the NADPH site. Residues lysine 107, glycine 136, and serine 138 each contribute to the sn-glycerol 3-phosphate site. Residue alanine 140 participates in NADPH binding. Lysine 191, aspartate 244, serine 254, arginine 255, and asparagine 256 together coordinate sn-glycerol 3-phosphate. Lysine 191 functions as the Proton acceptor in the catalytic mechanism. An NADPH-binding site is contributed by arginine 255. NADPH contacts are provided by isoleucine 279 and glutamate 281.

It belongs to the NAD-dependent glycerol-3-phosphate dehydrogenase family.

It localises to the cytoplasm. The catalysed reaction is sn-glycerol 3-phosphate + NAD(+) = dihydroxyacetone phosphate + NADH + H(+). The enzyme catalyses sn-glycerol 3-phosphate + NADP(+) = dihydroxyacetone phosphate + NADPH + H(+). The protein operates within membrane lipid metabolism; glycerophospholipid metabolism. Catalyzes the reduction of the glycolytic intermediate dihydroxyacetone phosphate (DHAP) to sn-glycerol 3-phosphate (G3P), the key precursor for phospholipid synthesis. In Nitrosospira multiformis (strain ATCC 25196 / NCIMB 11849 / C 71), this protein is Glycerol-3-phosphate dehydrogenase [NAD(P)+].